Here is a 256-residue protein sequence, read N- to C-terminus: N-glycosylase/DNA lyase (256 aa).

3 residues coordinate 8-oxoguanine: Q31, S58, and W69. A helix-hairpin-helix region spans residues 125–184 (TLRQLSHIVGARREQKTLVFTIKILNYAYMCSRGVNRVLPFDIPIPVDYRVARLTWCAGL). K140 functions as the Schiff-base intermediate with DNA in the catalytic mechanism. 8-oxoguanine-binding residues include F144 and P170. Residue D172 is part of the active site. The 8-oxoguanine site is built by D218 and W222.

This sequence belongs to the archaeal N-glycosylase/DNA lyase (AGOG) family.

The enzyme catalyses 2'-deoxyribonucleotide-(2'-deoxyribose 5'-phosphate)-2'-deoxyribonucleotide-DNA = a 3'-end 2'-deoxyribonucleotide-(2,3-dehydro-2,3-deoxyribose 5'-phosphate)-DNA + a 5'-end 5'-phospho-2'-deoxyribonucleoside-DNA + H(+). DNA repair enzyme that is part of the base excision repair (BER) pathway; protects from oxidative damage by removing the major product of DNA oxidation, 8-oxoguanine (GO), from single- and double-stranded DNA substrates. This is N-glycosylase/DNA lyase from Pyrobaculum aerophilum (strain ATCC 51768 / DSM 7523 / JCM 9630 / CIP 104966 / NBRC 100827 / IM2).